Reading from the N-terminus, the 475-residue chain is Ankyrin repeat, SAM and basic leucine zipper domain-containing protein 1 (475 aa).

The segment at 1 to 25 is disordered; that stretch reads MAAGALRGLPVAGGGESSESEDDGW. 3 positions are modified to phosphoserine: Ser17, Ser18, and Ser20. 6 ANK repeats span residues 45–74, 78–107, 110–144, 148–177, 181–210, and 214–243; these read EKKE…SVDS, YGWT…NASF, DKQT…DPNV, RLMT…EVNT, NGYT…NKML, and DGKM…PLEG. The SAM domain occupies 272 to 334; sequence SYTAFGDLEV…KILAALKELQ (63 aa).

Interacts with DDX4, PIWIL1, RANBP9 and TDRD1.

The protein resides in the cytoplasm. In terms of biological role, plays a central role during spermatogenesis by repressing transposable elements and preventing their mobilization, which is essential for the germline integrity. Acts via the piRNA metabolic process, which mediates the repression of transposable elements during meiosis by forming complexes composed of piRNAs and Piwi proteins and governs the methylation and subsequent repression of transposons. Its association with pi-bodies suggests a participation in the primary piRNAs metabolic process. Required prior to the pachytene stage to facilitate the production of multiple types of piRNAs, including those associated with repeats involved in the regulation of retrotransposons. May act by mediating protein-protein interactions during germ cell maturation. The protein is Ankyrin repeat, SAM and basic leucine zipper domain-containing protein 1 (ASZ1) of Papio anubis (Olive baboon).